We begin with the raw amino-acid sequence, 369 residues long: H-2 class I histocompatibility antigen, K-K alpha chain (369 aa).

An N-terminal signal peptide occupies residues 1-21 (MAPCMLLLLLAAALAPTQTRA). Residues 22–111 (GPHSLRYFHT…ALRYYNQSAG (90 aa)) are alpha-1. Topologically, residues 22–305 (GPHSLRYFHT…EPPPSTVSNT (284 aa)) are extracellular. A glycan (N-linked (GlcNAc...) asparagine) is linked at asparagine 107. Residues 112-203 (GSHTFQRMYG…QLGNATLPRT (92 aa)) are alpha-2. The cysteines at positions 122 and 185 are disulfide-linked. Asparagine 197 carries an N-linked (GlcNAc...) asparagine glycan. Residues 204–295 (DSPKAHVTRH…GLPEPLTLRW (92 aa)) form an alpha-3 region. The 89-residue stretch at 206-294 (PKAHVTRHSR…QGLPEPLTLR (89 aa)) folds into the Ig-like C1-type domain. Cysteines 224 and 280 form a disulfide. The segment at 296–305 (EPPPSTVSNT) is connecting peptide. Residues 306-328 (VIIAVLVVLGAAIVTGAVVAFVM) traverse the membrane as a helical segment. Residues 329–369 (KMRRRNTGGKGGDYALAPGSQTSDLSLPDCKVMVHDPHSLA) are Cytoplasmic-facing. A phosphoserine mark is found at serine 351 and serine 354.

It belongs to the MHC class I family. In terms of assembly, heterodimer of an alpha chain and a beta chain (beta-2-microglobulin).

It localises to the membrane. Functionally, involved in the presentation of foreign antigens to the immune system. In Mus musculus (Mouse), this protein is H-2 class I histocompatibility antigen, K-K alpha chain (H2-K1).